The following is a 219-amino-acid chain: Large ribosomal subunit protein uL16 (219 aa).

This sequence belongs to the universal ribosomal protein uL16 family. As to quaternary structure, component of the large ribosomal subunit. Mature ribosomes consist of a small (40S) and a large (60S) subunit. The 40S subunit contains about 33 different proteins and 1 molecule of RNA (18S). The 60S subunit contains about 49 different proteins and 3 molecules of RNA (28S, 5.8S and 5S).

The chain is Large ribosomal subunit protein uL16 (RpL10) from Bombyx mandarina (Wild silk moth).